Reading from the N-terminus, the 867-residue chain is Mitochondrial escape protein 2 (867 aa).

Residues 1 to 25 (MIIRTLRSQLRLPKPVYISPPCRYY) constitute a mitochondrion transit peptide. Topologically, residues 26–279 (STDLEKLKKE…LVSLISNHTK (254 aa)) are mitochondrial matrix. The RRM domain occupies 179-264 (GTPWIEDLRR…TTLHIQFVAI (86 aa)). Residues 280 to 300 (IAIPVLIALLATFAVLIFDPI) traverse the membrane as a helical segment. The Mitochondrial intermembrane portion of the chain corresponds to 301 to 867 (REWFIEYKIL…DGKSFLGIKF (567 aa)). A coiled-coil region spans residues 795–852 (IGRLISLEAAKIQKLEEELEKIYKIGKVDGRIDYVSQKIEASNKKILDLEKQAADVAS).

This sequence belongs to the YME2 family.

The protein resides in the mitochondrion inner membrane. Its function is as follows. Plays a role in maintaining the mitochondrial genome and in controlling the mtDNA escape. Involved in the regulation of mtDNA nucleotide structure and number. May have a dispensable role in early maturation of pre-rRNA. This is Mitochondrial escape protein 2 (PRP13) from Candida albicans (strain SC5314 / ATCC MYA-2876) (Yeast).